Reading from the N-terminus, the 120-residue chain is Large ribosomal subunit protein uL18 (120 aa).

In terms of assembly, part of the 50S ribosomal subunit; part of the 5S rRNA/L5/L18/L25 subcomplex. Contacts the 5S and 23S rRNAs.

Functionally, this is one of the proteins that bind and probably mediate the attachment of the 5S RNA into the large ribosomal subunit, where it forms part of the central protuberance. The sequence is that of Large ribosomal subunit protein uL18 from Rhodopseudomonas palustris (strain ATCC BAA-98 / CGA009).